A 759-amino-acid chain; its full sequence is Tripartite motif-containing protein 46 (759 aa).

Residues 1-166 (MAEGEDMQTF…VERYRQSVSV (166 aa)) form a required for proximal axon localization, axon formation and migration region. Residues 33-59 (CPVCQEMYKQPLVLPCTHNVCQACARE) form an RING-type 1; degenerate zinc finger. The tract at residues 67–98 (IGHGGDPSSEPTSPASTPSTRSPRLSRRTLPK) is disordered. Residues 73–89 (PSSEPTSPASTPSTRSP) show a composition bias toward low complexity. The RING-type 2; degenerate zinc finger occupies 172-231 (CQLCKPPPLEATKGCTECRATFCNECFKLFHPWGTQKAQHEPTLPTLSFRPKGLMCPDHK). Residues 222 to 263 (PKGLMCPDHKEEVTHYCKTCQRLVCQLCRVRRTHSGHKITPV) form a B box-type zinc finger. The Zn(2+) site is built by Cys227, His230, Cys249, and His255. Residues 322–400 (AVLEEKRASL…RATEALQTFR (79 aa)) adopt a coiled-coil conformation. Ser330 carries the post-translational modification Phosphoserine. The 58-residue stretch at 370 to 427 (LKETDQPCFVQAAKQLHNRIARATEALQTFRPAASSSFRHCQLDVGREMKLLTELSFL) folds into the COS domain. The tract at residues 411-429 (QLDVGREMKLLTELSFLRV) is required for microtubule association, proximal axon localization and axon formation. Residues 429 to 528 (VPEAPVIDTQ…EDVHLHTPPA (100 aa)) enclose the Fibronectin type-III domain. In terms of domain architecture, B30.2/SPRY spans 526-747 (PPAPVLHFFL…LQEPVGTKPE (222 aa)). A Phosphoserine modification is found at Ser627.

The protein belongs to the TRIM/RBCC family. Interacts with TUBB3 and TUBA4A. In terms of tissue distribution, expressed in the central nervous system, including pyramidal neurons and interneurons in the cortex and hippocampus and all neuronal cell types in the cerebral and cerebellar cortex, and in the peripheral nervous system, including the dorsal root ganglion neurons.

The protein resides in the cell projection. It is found in the axon. The protein localises to the cytoplasm. It localises to the cytoskeleton. Microtubule-associated protein that is involved in the formation of parallel microtubule bundles linked by cross-bridges in the proximal axon. Required for the uniform orientation and maintenance of the parallel microtubule fascicles, which are important for efficient cargo delivery and trafficking in axons. Thereby also required for proper axon formation, the establishment of neuronal polarity and proper neuronal migration. In Mus musculus (Mouse), this protein is Tripartite motif-containing protein 46 (Trim46).